An 85-amino-acid polypeptide reads, in one-letter code: Protein RnfH (85 aa).

This sequence belongs to the UPF0125 (RnfH) family.

The chain is Protein RnfH from Cereibacter sphaeroides (strain ATCC 17029 / ATH 2.4.9) (Rhodobacter sphaeroides).